Here is a 522-residue protein sequence, read N- to C-terminus: Peptide chain release factor 3 (522 aa).

In terms of domain architecture, tr-type G spans 9–276; the sequence is KKRRTFAIIS…SFVNLAPAPQ (268 aa). Residues 18–25, 86–90, and 140–143 each bind GTP; these read SHPDAGKT, DTPGH, and NKLD.

The protein belongs to the TRAFAC class translation factor GTPase superfamily. Classic translation factor GTPase family. PrfC subfamily.

The protein localises to the cytoplasm. Functionally, increases the formation of ribosomal termination complexes and stimulates activities of RF-1 and RF-2. It binds guanine nucleotides and has strong preference for UGA stop codons. It may interact directly with the ribosome. The stimulation of RF-1 and RF-2 is significantly reduced by GTP and GDP, but not by GMP. The polypeptide is Peptide chain release factor 3 (Lactobacillus gasseri (strain ATCC 33323 / DSM 20243 / BCRC 14619 / CIP 102991 / JCM 1131 / KCTC 3163 / NCIMB 11718 / NCTC 13722 / AM63)).